The primary structure comprises 471 residues: ATP synthase subunit beta (471 aa).

Residue 153–160 (GGAGVGKT) coordinates ATP.

The protein belongs to the ATPase alpha/beta chains family. F-type ATPases have 2 components, CF(1) - the catalytic core - and CF(0) - the membrane proton channel. CF(1) has five subunits: alpha(3), beta(3), gamma(1), delta(1), epsilon(1). CF(0) has four main subunits: a(1), b(1), b'(1) and c(9-12).

Its subcellular location is the cell inner membrane. It carries out the reaction ATP + H2O + 4 H(+)(in) = ADP + phosphate + 5 H(+)(out). Produces ATP from ADP in the presence of a proton gradient across the membrane. The catalytic sites are hosted primarily by the beta subunits. The chain is ATP synthase subunit beta from Methylibium petroleiphilum (strain ATCC BAA-1232 / LMG 22953 / PM1).